A 292-amino-acid chain; its full sequence is MTFQDLILALQGYWAQQGCVIQQPYDTEKGAGTFNPATFLRVLGPEPWNVAYVEPSRRPTDGRYGENPNRLQHYYQFQVIMKPSPMNILDLYLDSLRAFGIDPAKHDIRFVEDDWESPTLGAWGLGWEVWLDGMEITQFTYFQQAGGIDLKPVSSEITYGCERIAMYLQGVDNVYDLEWVKGVSYGDIHHRTEVEFSTYNFEEADVDMLLTLFTMYEKECVRLVERGLVLPAYDFVMKCSHTFNLLDARGAISVTERASYIGRVRNVARLCAEGYLKLRESLGFPLLKGGRK.

Belongs to the class-II aminoacyl-tRNA synthetase family. In terms of assembly, tetramer of two alpha and two beta subunits.

The protein localises to the cytoplasm. It catalyses the reaction tRNA(Gly) + glycine + ATP = glycyl-tRNA(Gly) + AMP + diphosphate. The chain is Glycine--tRNA ligase alpha subunit from Geobacter sulfurreducens (strain ATCC 51573 / DSM 12127 / PCA).